The primary structure comprises 279 residues: NADPH-dependent 7-cyano-7-deazaguanine reductase (279 aa).

86–88 (IES) contributes to the substrate binding site. 88 to 89 (SK) lines the NADPH pocket. Catalysis depends on C186, which acts as the Thioimide intermediate. The Proton donor role is filled by D193. 225 to 226 (HE) is a substrate binding site. Position 254 to 255 (254 to 255 (RG)) interacts with NADPH.

Belongs to the GTP cyclohydrolase I family. QueF type 2 subfamily. As to quaternary structure, homodimer.

The protein localises to the cytoplasm. The catalysed reaction is 7-aminomethyl-7-carbaguanine + 2 NADP(+) = 7-cyano-7-deazaguanine + 2 NADPH + 3 H(+). It functions in the pathway tRNA modification; tRNA-queuosine biosynthesis. Catalyzes the NADPH-dependent reduction of 7-cyano-7-deazaguanine (preQ0) to 7-aminomethyl-7-deazaguanine (preQ1). This chain is NADPH-dependent 7-cyano-7-deazaguanine reductase, found in Chromobacterium violaceum (strain ATCC 12472 / DSM 30191 / JCM 1249 / CCUG 213 / NBRC 12614 / NCIMB 9131 / NCTC 9757 / MK).